The following is a 31-amino-acid chain: Putative gene 37 protein (31 aa).

This is Putative gene 37 protein (37) from Bacillus subtilis (Bacteriophage SP01).